The chain runs to 590 residues: KNR4/SMI1 homolog 2 (590 aa).

3 disordered regions span residues 59-97 (SSSH…SNTN), 216-239 (FQHQ…ETHG), and 407-590 (TPQR…DVAL). The span at 71–85 (GSRTSLSRNGSSTTV) shows a compositional bias: polar residues. The span at 217 to 226 (QHQQQQQQHQ) shows a compositional bias: low complexity. The segment covering 430–454 (PSMSGATANTNKSQNPLINMESSSK) has biased composition (polar residues). Basic and acidic residues-rich tracts occupy residues 470-481 (PEEPVKKSEVKS) and 489-515 (EPEK…AKED). Positions 516–528 (DKEEEEEEQEEEK) are enriched in acidic residues. Over residues 554–568 (TQKKNQSKKAKKQQQ) the composition is skewed to basic residues. Positions 576-590 (NDVEEVAEDLNDVAL) are enriched in acidic residues.

Belongs to the KNR4/SMI1 family.

The sequence is that of KNR4/SMI1 homolog 2 from Debaryomyces hansenii (strain ATCC 36239 / CBS 767 / BCRC 21394 / JCM 1990 / NBRC 0083 / IGC 2968) (Yeast).